Reading from the N-terminus, the 590-residue chain is CTP synthase (590 aa).

An amidoligase domain region spans residues 1–278 (MRKHPQSATK…DAFVVRRLNL (278 aa)). Ser20 lines the CTP pocket. UTP is bound at residue Ser20. Residues 21-26 (SLGKGL) and Asp78 contribute to the ATP site. Asp78 and Glu152 together coordinate Mg(2+). CTP-binding positions include 159-161 (DIE), 199-204 (KTKPTQ), and Lys235. UTP-binding positions include 199 to 204 (KTKPTQ) and Lys235. Residues 303–551 (RIALVGKYVD…VGAAIDYKSA (249 aa)) form the Glutamine amidotransferase type-1 domain. Residue Gly366 coordinates L-glutamine. Residue Cys393 is the Nucleophile; for glutamine hydrolysis of the active site. L-glutamine is bound by residues 394–397 (LGLQ), Glu416, and Arg477. Active-site residues include His524 and Glu526. The interval 566–590 (EHLPNSSNQHRDGVERSFPAPAARG) is disordered.

This sequence belongs to the CTP synthase family. In terms of assembly, homotetramer.

It catalyses the reaction UTP + L-glutamine + ATP + H2O = CTP + L-glutamate + ADP + phosphate + 2 H(+). The catalysed reaction is L-glutamine + H2O = L-glutamate + NH4(+). It carries out the reaction UTP + NH4(+) + ATP = CTP + ADP + phosphate + 2 H(+). Its pathway is pyrimidine metabolism; CTP biosynthesis via de novo pathway; CTP from UDP: step 2/2. With respect to regulation, allosterically activated by GTP, when glutamine is the substrate; GTP has no effect on the reaction when ammonia is the substrate. The allosteric effector GTP functions by stabilizing the protein conformation that binds the tetrahedral intermediate(s) formed during glutamine hydrolysis. Inhibited by the product CTP, via allosteric rather than competitive inhibition. Functionally, catalyzes the ATP-dependent amination of UTP to CTP with either L-glutamine or ammonia as the source of nitrogen. Regulates intracellular CTP levels through interactions with the four ribonucleotide triphosphates. The chain is CTP synthase from Mycobacterium leprae (strain Br4923).